A 492-amino-acid polypeptide reads, in one-letter code: Ribose import ATP-binding protein RbsA (492 aa).

2 ABC transporter domains span residues I3–S239 and A249–Q492. G35 to S42 is an ATP binding site.

It belongs to the ABC transporter superfamily. Ribose importer (TC 3.A.1.2.1) family. As to quaternary structure, the complex is composed of an ATP-binding protein (RbsA), two transmembrane proteins (RbsC) and a solute-binding protein (RbsB).

Its subcellular location is the cell membrane. It catalyses the reaction D-ribose(out) + ATP + H2O = D-ribose(in) + ADP + phosphate + H(+). In terms of biological role, part of the ABC transporter complex RbsABC involved in ribose import. Responsible for energy coupling to the transport system. The protein is Ribose import ATP-binding protein RbsA of Lactococcus lactis subsp. lactis (strain IL1403) (Streptococcus lactis).